We begin with the raw amino-acid sequence, 556 residues long: Neurofilament light polypeptide (556 aa).

Ser-2 is modified (N-acetylserine). The head stretch occupies residues Ser-2 to Gln-94. An IF rod domain is found at Glu-91 to Leu-402. A coil 1A region spans residues Leu-95–Leu-126. Residues Arg-127–Leu-139 are linker 1. The coil 1B stretch occupies residues Tyr-140 to Leu-235. Residues Gln-236–Pro-254 are linker 12. A coil 2A region spans residues Asp-255–Arg-273. A linker 2 region spans residues Asn-274–Phe-282. The coil 2B stretch occupies residues Arg-283–Glu-398. The tract at residues Glu-399–Tyr-445 is tail, subdomain A. Residues Glu-399–Ala-556 are tail. The interval Ser-446–Ala-556 is tail, subdomain B (acidic). The span at Lys-464 to Ala-473 shows a compositional bias: low complexity. Positions Lys-464–Ala-556 are disordered. Over residues Glu-474–Glu-540 the composition is skewed to acidic residues. Residues Glu-541 to Ala-556 show a composition bias toward basic and acidic residues.

Belongs to the intermediate filament family. As to quaternary structure, forms homodimers (in vitro).

Its subcellular location is the cell projection. It localises to the axon. The protein localises to the cytoplasm. The protein resides in the cytoskeleton. In terms of biological role, neurofilaments usually contain three intermediate filament proteins: NEFL, NEFM, and NEFH which are involved in the maintenance of neuronal caliber. May additionally cooperate with the neuronal intermediate filament proteins to form neuronal filamentous networks. In Coturnix japonica (Japanese quail), this protein is Neurofilament light polypeptide (NEFL).